Here is a 157-residue protein sequence, read N- to C-terminus: Putative tRNA (cytidine(34)-2'-O)-methyltransferase (157 aa).

Positions 79, 104, and 125 each coordinate S-adenosyl-L-methionine.

This sequence belongs to the class IV-like SAM-binding methyltransferase superfamily. RNA methyltransferase TrmH family. TrmL subfamily.

Its subcellular location is the cytoplasm. The enzyme catalyses cytidine(34) in tRNA + S-adenosyl-L-methionine = 2'-O-methylcytidine(34) in tRNA + S-adenosyl-L-homocysteine + H(+). The catalysed reaction is 5-carboxymethylaminomethyluridine(34) in tRNA(Leu) + S-adenosyl-L-methionine = 5-carboxymethylaminomethyl-2'-O-methyluridine(34) in tRNA(Leu) + S-adenosyl-L-homocysteine + H(+). Could methylate the ribose at the nucleotide 34 wobble position in tRNA. In Geobacillus stearothermophilus (Bacillus stearothermophilus), this protein is Putative tRNA (cytidine(34)-2'-O)-methyltransferase.